The primary structure comprises 86 residues: MERKQRKVYQGRVVSDKMDKTITVVVETKRNHPVYGKRINYSKKYKAHDENNSAKTGDIVRIMETRPLSKDKHFRLVEIVEEAVII.

The protein belongs to the universal ribosomal protein uS17 family. As to quaternary structure, part of the 30S ribosomal subunit.

In terms of biological role, one of the primary rRNA binding proteins, it binds specifically to the 5'-end of 16S ribosomal RNA. The protein is Small ribosomal subunit protein uS17 of Lactococcus lactis subsp. cremoris (strain MG1363).